We begin with the raw amino-acid sequence, 110 residues long: Large ribosomal subunit protein uL22 (110 aa).

The protein belongs to the universal ribosomal protein uL22 family. In terms of assembly, part of the 50S ribosomal subunit.

This protein binds specifically to 23S rRNA; its binding is stimulated by other ribosomal proteins, e.g. L4, L17, and L20. It is important during the early stages of 50S assembly. It makes multiple contacts with different domains of the 23S rRNA in the assembled 50S subunit and ribosome. Functionally, the globular domain of the protein is located near the polypeptide exit tunnel on the outside of the subunit, while an extended beta-hairpin is found that lines the wall of the exit tunnel in the center of the 70S ribosome. The polypeptide is Large ribosomal subunit protein uL22 (Vibrio parahaemolyticus serotype O3:K6 (strain RIMD 2210633)).